The chain runs to 350 residues: Uroporphyrinogen decarboxylase (350 aa).

Residues 27 to 31 (RQAGR), Phe46, Asp76, Tyr152, Ser207, and His321 contribute to the substrate site.

Belongs to the uroporphyrinogen decarboxylase family. In terms of assembly, homodimer.

The protein localises to the cytoplasm. It carries out the reaction uroporphyrinogen III + 4 H(+) = coproporphyrinogen III + 4 CO2. It functions in the pathway porphyrin-containing compound metabolism; protoporphyrin-IX biosynthesis; coproporphyrinogen-III from 5-aminolevulinate: step 4/4. Catalyzes the decarboxylation of four acetate groups of uroporphyrinogen-III to yield coproporphyrinogen-III. The protein is Uroporphyrinogen decarboxylase of Listeria innocua serovar 6a (strain ATCC BAA-680 / CLIP 11262).